Consider the following 1403-residue polypeptide: Envelopment polyprotein (1403 aa).

A signal peptide spans 1-17 (MLLNIVLISNLACLAFA). The Lumenal portion of the chain corresponds to 18-209 (LPLKEGTRGS…ELMIESFCTN (192 aa)). Asn-40 carries N-linked (GlcNAc...) asparagine; by host glycosylation. The helical transmembrane segment at 210–230 (LELILLVTFILVGSVMMMILT) threads the bilayer. Residues 231–314 (KTYIVYVFIP…PKTRKLCKSK (84 aa)) lie on the Cytoplasmic side of the membrane. Residues 315–335 (ISNIVLCVITSLIFFSFITPI) traverse the membrane as a helical segment. The Lumenal portion of the chain corresponds to 336 to 361 (SSQCIDIEKLPDEYITCKRELANIKS). A helical transmembrane segment spans residues 362–382 (LTIDDTYSFIYSCTCIIVLIL). Over 383–448 (LKKAAKYILY…FKFESSYNRT (66 aa)) the chain is Cytoplasmic. The helical transmembrane segment at 449–469 (GLIIFMLLLVPTIVMTQETSI) threads the bilayer. At 470–1361 (NCKNIQSTQL…GNLSFYWRLT (892 aa)) the chain is on the lumenal side. Residues Cys-471 and Cys-487 are joined by a disulfide bond. Residue Asn-493 is glycosylated (N-linked (GlcNAc...) asparagine; by host). Disulfide bonds link Cys-523–Cys-550, Cys-580–Cys-589, and Cys-591–Cys-598. N-linked (GlcNAc...) asparagine; by host glycosylation is found at Asn-686 and Asn-1353. A helical membrane pass occupies residues 1362–1382 (IYIIISLIMLILFLYILIPLC). Over 1383–1403 (KRLKGLLEYNERIYQMENKFK) the chain is Cytoplasmic.

This sequence belongs to the nairovirus envelope glycoprotein family. As to quaternary structure, heterodimer with glycoprotein C; in prefusion state. Heterodimer with glycoprotein N; in prefusion state. Homotrimeric; in postfusion state. Post-translationally, specific enzymatic cleavage by host MBTPS1/S1P/SKI-1 endopeptidase yield glycoprotein N. Specific enzymatic cleavages by host furin-like protease and MBTPS1/S1P endopeptidase yield GP38. Glycosylated.

The protein localises to the host endoplasmic reticulum membrane. It localises to the virion membrane. Its subcellular location is the host Golgi apparatus membrane. Its function is as follows. Glycoprotein C and glycoprotein N interact with each other and are present at the surface of the virion. Glycoprotein N probably locks the Gn-Gc complex in a prefusion state. Glycoprotein N and glycoprotein C are able to attach the virion to host cell receptors. This attachment induces virion internalization predominantly through clathrin-dependent endocytosis. In terms of biological role, glycoprotein C and glycoprotein N interact with each other and are present at the surface of the virion. The spikes at the surface of the virion are formed by an N-terminal extension of glycoprotein C. Glycoprotein N and glycoprotein C are able to attach the virion to host cell receptors. This attachment induces virion internalization predominantly through clathrin-dependent endocytosis. Class II fusion protein that promotes fusion of viral membrane with host endosomal membrane after endocytosis of the virion. Exposure to potassium is necessary for the conformational change leading to fusion. The protein is Envelopment polyprotein (GP) of Bos taurus (Bovine).